A 233-amino-acid polypeptide reads, in one-letter code: Phosphoribosylaminoimidazole-succinocarboxamide synthase (233 aa).

Belongs to the SAICAR synthetase family.

The catalysed reaction is 5-amino-1-(5-phospho-D-ribosyl)imidazole-4-carboxylate + L-aspartate + ATP = (2S)-2-[5-amino-1-(5-phospho-beta-D-ribosyl)imidazole-4-carboxamido]succinate + ADP + phosphate + 2 H(+). Its pathway is purine metabolism; IMP biosynthesis via de novo pathway; 5-amino-1-(5-phospho-D-ribosyl)imidazole-4-carboxamide from 5-amino-1-(5-phospho-D-ribosyl)imidazole-4-carboxylate: step 1/2. This is Phosphoribosylaminoimidazole-succinocarboxamide synthase from Staphylococcus saprophyticus subsp. saprophyticus (strain ATCC 15305 / DSM 20229 / NCIMB 8711 / NCTC 7292 / S-41).